The following is a 288-amino-acid chain: N(1)-aminopropylagmatine ureohydrolase (288 aa).

6 residues coordinate Mn(2+): His114, Asp133, His135, Asp137, Asp213, and Asp215.

This sequence belongs to the arginase family. Mn(2+) serves as cofactor.

It is found in the cytoplasm. It catalyses the reaction N(1)-(3-aminopropyl)agmatine + H2O = urea + spermidine. The catalysed reaction is agmatine + H2O = urea + putrescine. Its pathway is amine and polyamine biosynthesis; spermidine biosynthesis. In terms of biological role, involved in the biosynthesis of polyamines which are thought to support the growth of thermophilic microorganisms under high-temperature conditions. It seems that long-chain and branched-chain of polyamines effectively stabilize DNA and RNA, respectively. Catalyzes the decarboxylation of N1-(3-aminopropyl)agmatine to yield spermidine and urea. It can also use agmatine to yield putrescine. In Thermococcus kodakarensis (strain ATCC BAA-918 / JCM 12380 / KOD1) (Pyrococcus kodakaraensis (strain KOD1)), this protein is N(1)-aminopropylagmatine ureohydrolase.